A 550-amino-acid chain; its full sequence is Chaperonin GroEL (550 aa).

Residues 30-33, K51, 87-91, G415, 479-481, and D495 contribute to the ATP site; these read TLGP, DGTTT, and NAA.

Belongs to the chaperonin (HSP60) family. Forms a cylinder of 14 subunits composed of two heptameric rings stacked back-to-back. Interacts with the co-chaperonin GroES.

The protein resides in the cytoplasm. The enzyme catalyses ATP + H2O + a folded polypeptide = ADP + phosphate + an unfolded polypeptide.. Together with its co-chaperonin GroES, plays an essential role in assisting protein folding. The GroEL-GroES system forms a nano-cage that allows encapsulation of the non-native substrate proteins and provides a physical environment optimized to promote and accelerate protein folding. This Burkholderia mallei (strain NCTC 10247) protein is Chaperonin GroEL.